The sequence spans 383 residues: Proton extrusion protein PxcA (383 aa).

The next 4 membrane-spanning stretches (helical) occupy residues 163–183, 258–278, 306–326, and 341–361; these read ILLL…AYII, AVKN…VCFA, IILF…TVLL, and FVML…KYWI.

It belongs to the CemA family.

Its subcellular location is the cell inner membrane. Its function is as follows. Required for H(+) efflux immediately after light irradiation to form a rapid H(+) concentration gradient across the thylakoid membranes. Together with PxcL, contributes to transient H(+) uptake following dark to light transition. This is Proton extrusion protein PxcA from Synechococcus sp. (strain CC9902).